The primary structure comprises 969 residues: Leucine--tRNA ligase (969 aa).

The 'HIGH' region motif lies at 45–55; the sequence is PYTNAPLHIGH. Residues 649-653 carry the 'KMSKS' region motif; that stretch reads KMSKS. An ATP-binding site is contributed by Lys652.

This sequence belongs to the class-I aminoacyl-tRNA synthetase family.

The protein localises to the cytoplasm. The enzyme catalyses tRNA(Leu) + L-leucine + ATP = L-leucyl-tRNA(Leu) + AMP + diphosphate. This is Leucine--tRNA ligase from Staphylothermus marinus (strain ATCC 43588 / DSM 3639 / JCM 9404 / F1).